The primary structure comprises 90 residues: DNA-binding protein HU-alpha (90 aa).

It belongs to the bacterial histone-like protein family. As to quaternary structure, heterodimer of an alpha and a beta chain.

Functionally, histone-like DNA-binding protein which is capable of wrapping DNA to stabilize it, and thus to prevent its denaturation under extreme environmental conditions. In Serratia marcescens, this protein is DNA-binding protein HU-alpha (hupA).